The following is a 200-amino-acid chain: MIVGVLALQGGVEEHLTALEALGATTRKVRVPKDLDGLEGIVIPGGESTVLDKLARTFDVAEPLANLIRDGLPVFATCAGLIYLAKHLDNPARGQQTLELLDVVVRRNAFGTQRESFDTTVDVSFDGATFPGVQASFIRAPIVTAFGPTVEAIAALNGGEVVGVRQGNIIALSFHPEETGDYRIHQAWLNLIGKRTELAI.

46 to 48 provides a ligand contact to L-glutamine; sequence GES. C78 acts as the Nucleophile in catalysis. Residues R107 and 138–139 each bind L-glutamine; that span reads IR. Active-site charge relay system residues include H175 and E177.

Belongs to the glutaminase PdxT/SNO family. As to quaternary structure, in the presence of PdxS, forms a dodecamer of heterodimers. Only shows activity in the heterodimer.

The enzyme catalyses aldehydo-D-ribose 5-phosphate + D-glyceraldehyde 3-phosphate + L-glutamine = pyridoxal 5'-phosphate + L-glutamate + phosphate + 3 H2O + H(+). It catalyses the reaction L-glutamine + H2O = L-glutamate + NH4(+). Its pathway is cofactor biosynthesis; pyridoxal 5'-phosphate biosynthesis. Its function is as follows. Catalyzes the hydrolysis of glutamine to glutamate and ammonia as part of the biosynthesis of pyridoxal 5'-phosphate. The resulting ammonia molecule is channeled to the active site of PdxS. The sequence is that of Pyridoxal 5'-phosphate synthase subunit PdxT from Corynebacterium glutamicum (strain R).